We begin with the raw amino-acid sequence, 353 residues long: tRNA-specific 2-thiouridylase MnmA (353 aa).

Residues 6 to 13 (GMSGGVDS) and Leu-32 contribute to the ATP site. Cys-99 serves as the catalytic Nucleophile. A disulfide bridge links Cys-99 with Cys-197. Gly-124 contacts ATP. Residues 147–149 (KDQ) form an interaction with tRNA region. Catalysis depends on Cys-197, which acts as the Cysteine persulfide intermediate. The segment at 303-304 (RY) is interaction with tRNA.

Belongs to the MnmA/TRMU family.

Its subcellular location is the cytoplasm. The catalysed reaction is S-sulfanyl-L-cysteinyl-[protein] + uridine(34) in tRNA + AH2 + ATP = 2-thiouridine(34) in tRNA + L-cysteinyl-[protein] + A + AMP + diphosphate + H(+). Its function is as follows. Catalyzes the 2-thiolation of uridine at the wobble position (U34) of tRNA, leading to the formation of s(2)U34. The chain is tRNA-specific 2-thiouridylase MnmA from Persephonella marina (strain DSM 14350 / EX-H1).